The sequence spans 398 residues: Acetyl-CoA acetyltransferase erg10B, cytosolic (398 aa).

Catalysis depends on Cys-92, which acts as the Acyl-thioester intermediate. Tyr-187 serves as a coordination point for K(+). CoA is bound by residues Asn-229 and Lys-232. Residues Ala-249, Pro-250, and Ser-252 each contribute to the K(+) site. Ser-253 lines the CoA pocket. Val-350 contributes to the K(+) binding site. Catalysis depends on proton acceptor residues His-354 and Cys-384. Asn-385 contributes to the chloride binding site.

The protein belongs to the thiolase-like superfamily. Thiolase family. In terms of assembly, homotetramer. The cofactor is K(+).

Its subcellular location is the cytoplasm. It localises to the cytosol. The enzyme catalyses 2 acetyl-CoA = acetoacetyl-CoA + CoA. The protein operates within metabolic intermediate biosynthesis; (R)-mevalonate biosynthesis; (R)-mevalonate from acetyl-CoA: step 1/3. Activity is increased by monovalent cations such as K(+), Rb(+) or Cs(+). In terms of biological role, acetyl-CoA acetyltransferase; part of the first module of ergosterol biosynthesis pathway that includes the early steps of the pathway, conserved across all eukaryotes, and which results in the formation of mevalonate from acetyl-coenzyme A (acetyl-CoA). In this module, the cytosolic acetyl-CoA acetyltransferase erg10B catalyzes the formation of acetoacetyl-CoA. The hydroxymethylglutaryl-CoA synthases AFUA_8G07210 and AFUA_3G10660 then condense acetyl-CoA with acetoacetyl-CoA to form HMG-CoA. The rate-limiting step of the early module is the reduction to mevalonate by the 3-hydroxy-3-methylglutaryl-coenzyme A (HMG-CoA) reductases hmg1 and hmg2. Mevalonate is also a precursor for the extracellular siderophore triacetylfusarinine C (TAFC). This chain is Acetyl-CoA acetyltransferase erg10B, cytosolic, found in Aspergillus fumigatus (strain CBS 144.89 / FGSC A1163 / CEA10) (Neosartorya fumigata).